An 86-amino-acid polypeptide reads, in one-letter code: Large ribosomal subunit protein bL31B (86 aa).

It belongs to the bacterial ribosomal protein bL31 family. Type B subfamily. As to quaternary structure, part of the 50S ribosomal subunit.

In Ralstonia pickettii (strain 12J), this protein is Large ribosomal subunit protein bL31B.